Consider the following 461-residue polypeptide: Bifunctional protein GlmU (461 aa).

The tract at residues 1-232 (MNLQIIILAA…SFEVQGINNR (232 aa)) is pyrophosphorylase. UDP-N-acetyl-alpha-D-glucosamine contacts are provided by residues 8-11 (LAAG), Lys22, Gln73, and 78-79 (GT). Asp102 provides a ligand contact to Mg(2+). Gly142, Glu157, and Asn230 together coordinate UDP-N-acetyl-alpha-D-glucosamine. Asn230 contacts Mg(2+). The interval 233–253 (QQLQQLERIWQQRAANQLMEK) is linker. Residues 254–461 (GATLADANRF…WKRPVKRERD (208 aa)) are N-acetyltransferase. The UDP-N-acetyl-alpha-D-glucosamine site is built by Arg336 and Lys354. His366 functions as the Proton acceptor in the catalytic mechanism. The UDP-N-acetyl-alpha-D-glucosamine site is built by Tyr369 and Asn380. Residues Ala383, 389–390 (NY), Ser408, and Ala426 contribute to the acetyl-CoA site.

It in the N-terminal section; belongs to the N-acetylglucosamine-1-phosphate uridyltransferase family. In the C-terminal section; belongs to the transferase hexapeptide repeat family. Homotrimer. It depends on Mg(2+) as a cofactor.

It localises to the cytoplasm. It catalyses the reaction alpha-D-glucosamine 1-phosphate + acetyl-CoA = N-acetyl-alpha-D-glucosamine 1-phosphate + CoA + H(+). The enzyme catalyses N-acetyl-alpha-D-glucosamine 1-phosphate + UTP + H(+) = UDP-N-acetyl-alpha-D-glucosamine + diphosphate. It functions in the pathway nucleotide-sugar biosynthesis; UDP-N-acetyl-alpha-D-glucosamine biosynthesis; N-acetyl-alpha-D-glucosamine 1-phosphate from alpha-D-glucosamine 6-phosphate (route II): step 2/2. Its pathway is nucleotide-sugar biosynthesis; UDP-N-acetyl-alpha-D-glucosamine biosynthesis; UDP-N-acetyl-alpha-D-glucosamine from N-acetyl-alpha-D-glucosamine 1-phosphate: step 1/1. It participates in bacterial outer membrane biogenesis; LPS lipid A biosynthesis. Functionally, catalyzes the last two sequential reactions in the de novo biosynthetic pathway for UDP-N-acetylglucosamine (UDP-GlcNAc). The C-terminal domain catalyzes the transfer of acetyl group from acetyl coenzyme A to glucosamine-1-phosphate (GlcN-1-P) to produce N-acetylglucosamine-1-phosphate (GlcNAc-1-P), which is converted into UDP-GlcNAc by the transfer of uridine 5-monophosphate (from uridine 5-triphosphate), a reaction catalyzed by the N-terminal domain. The polypeptide is Bifunctional protein GlmU (Legionella pneumophila subsp. pneumophila (strain Philadelphia 1 / ATCC 33152 / DSM 7513)).